Consider the following 262-residue polypeptide: Methylthioribulose-1-phosphate dehydratase (262 aa).

Cys115 serves as a coordination point for substrate. Zn(2+) contacts are provided by His133 and His135. The active-site Proton donor/acceptor is Glu158. His223 is a Zn(2+) binding site.

It belongs to the aldolase class II family. MtnB subfamily. The cofactor is Zn(2+).

The protein localises to the cytoplasm. The catalysed reaction is 5-(methylsulfanyl)-D-ribulose 1-phosphate = 5-methylsulfanyl-2,3-dioxopentyl phosphate + H2O. It participates in amino-acid biosynthesis; L-methionine biosynthesis via salvage pathway; L-methionine from S-methyl-5-thio-alpha-D-ribose 1-phosphate: step 2/6. Its function is as follows. Catalyzes the dehydration of methylthioribulose-1-phosphate (MTRu-1-P) into 2,3-diketo-5-methylthiopentyl-1-phosphate (DK-MTP-1-P). The protein is Methylthioribulose-1-phosphate dehydratase of Meyerozyma guilliermondii (strain ATCC 6260 / CBS 566 / DSM 6381 / JCM 1539 / NBRC 10279 / NRRL Y-324) (Yeast).